The sequence spans 596 residues: Sphingomyelinase C 1 (596 aa).

The N-terminal stretch at Met-1–Ser-36 is a signal peptide. The tract at residues Lys-63 to Ser-118 is disordered. A compositionally biased stretch (polar residues) spans Ser-67–Val-76. Residues Ser-83–Ser-118 are compositionally biased toward low complexity.

Its subcellular location is the secreted. It carries out the reaction a sphingomyelin + H2O = phosphocholine + an N-acylsphing-4-enine + H(+). The polypeptide is Sphingomyelinase C 1 (sph1) (Leptospira interrogans serogroup Icterohaemorrhagiae serovar copenhageni (strain Fiocruz L1-130)).